Consider the following 250-residue polypeptide: MSGHSKWATIKRKKAATDQKRGNLFTKLVKEITIAAKMGGGDPTGNPRLRLAIDTARSNSMPMDNIQRAIKKGTGELDGVSWDEITYEGYGPAGIALIIETATDNRNRTVADLRHIMSRNNGSLGESGSVAWMFQRKGSLDVPHSAVSEEQLMELLLDAGLEDLDQDDENYFTVITDIKDLESAKKALDEAGIAYENAKIDLIPDNYIELDADDAAKVMKLIDALESNDDVQAVYSNMELSESAMNSLSE.

It belongs to the TACO1 family.

Its subcellular location is the cytoplasm. This chain is Probable transcriptional regulatory protein Cag_0165, found in Chlorobium chlorochromatii (strain CaD3).